The sequence spans 327 residues: Aspartate--ammonia ligase (327 aa).

This sequence belongs to the class-II aminoacyl-tRNA synthetase family. AsnA subfamily.

Its subcellular location is the cytoplasm. The enzyme catalyses L-aspartate + NH4(+) + ATP = L-asparagine + AMP + diphosphate + H(+). Its pathway is amino-acid biosynthesis; L-asparagine biosynthesis; L-asparagine from L-aspartate (ammonia route): step 1/1. The chain is Aspartate--ammonia ligase from Bacillus cereus (strain G9842).